Reading from the N-terminus, the 580-residue chain is N(6)-adenosine-methyltransferase catalytic subunit METTL3 (580 aa).

A disordered region spans residues 1 to 70; sequence MSDTWSSIQA…PKPSTTSVAP (70 aa). Ser-2 is subject to N-acetylserine; alternate. A Phosphoserine; alternate modification is found at Ser-2. Over residues 28 to 37 the composition is skewed to basic and acidic residues; sequence QDSGHLDLRN. A phosphoserine mark is found at Ser-43, Ser-48, and Ser-50. Residues 55 to 67 show a composition bias toward low complexity; that stretch reads APTSSGPKPSTTS. Residues Lys-177, Lys-211, Lys-212, and Lys-215 each participate in a glycyl lysine isopeptide (Lys-Gly) (interchain with G-Cter in SUMO1) cross-link. Positions 198–217 are disordered; sequence LASSASEPAKEPAKKSRKHA. The short motif at 210 to 215 is the Nuclear localization signal element; it reads AKKSRK. Ser-219, Ser-243, and Ser-350 each carry phosphoserine. S-adenosyl-L-methionine-binding positions include 377–378 and Asp-395; that span reads DI. The segment at 396–410 is gate loop 1; that stretch reads PPWDIHMELPYGTLT. Interaction with METTL14 stretches follow at residues 450 to 454 and 464 to 480; these read ERVDE and QRIIRTGRTGHWLNHGK. The interval 462–479 is interphase loop; it reads QLQRIIRTGRTGHWLNHG. Residues 465–478 are positively charged region required for RNA-binding; it reads RIIRTGRTGHWLNH. The interval 507 to 515 is gate loop 2; that stretch reads VRSTSHKPD. Residues Lys-513, 536 to 539, and 549 to 550 contribute to the S-adenosyl-L-methionine site; these read RPHN and NQ.

This sequence belongs to the MT-A70-like family. Heterodimer; heterodimerizes with METTL14 to form an antiparallel heterodimer that constitutes an active methyltransferase. Component of the WMM complex, a N6-methyltransferase complex composed of a catalytic subcomplex, named MAC, and of an associated subcomplex, named MACOM. The MAC subcomplex is composed of METTL3 and METTL14. The MACOM subcomplex is composed of WTAP, ZC3H13, CBLL1/HAKAI, VIRMA, and, in some cases of RBM15 (RBM15 or RBM15B). Interacts with NCBP1/CBP80. Interacts with EIF4E. Interacts with EIF3B. Sumoylation inhibits the N6-adenosine-methyltransferase activity. Sumoylation does not affect subcellular location or interaction with METTL14. Desumoylated by SENP1. In terms of tissue distribution, present in both germ cells and somatic cells during testis development (at protein level).

The protein localises to the nucleus. It is found in the nucleus speckle. The protein resides in the cytoplasm. It carries out the reaction an adenosine in mRNA + S-adenosyl-L-methionine = an N(6)-methyladenosine in mRNA + S-adenosyl-L-homocysteine + H(+). Its activity is regulated as follows. Methyltransferase activity is regulated by miRNAs via a sequence pairing mechanism. Methyltransferase activity is inhibited by sumoylation. Its function is as follows. The METTL3-METTL14 heterodimer forms a N6-methyltransferase complex that methylates adenosine residues at the N(6) position of some RNAs and regulates various processes such as the circadian clock, differentiation of embryonic and hematopoietic stem cells, cortical neurogenesis, response to DNA damage, differentiation of T-cells and primary miRNA processing. In the heterodimer formed with METTL14, METTL3 constitutes the catalytic core. N6-methyladenosine (m6A), which takes place at the 5'-[AG]GAC-3' consensus sites of some mRNAs, plays a role in mRNA stability, processing, translation efficiency and editing. M6A acts as a key regulator of mRNA stability: methylation is completed upon the release of mRNA into the nucleoplasm and promotes mRNA destabilization and degradation. In embryonic stem cells (ESCs), m6A methylation of mRNAs encoding key naive pluripotency-promoting transcripts results in transcript destabilization, promoting differentiation of ESCs. M6A regulates the length of the circadian clock: acts as an early pace-setter in the circadian loop by putting mRNA production on a fast-track for facilitating nuclear processing, thereby providing an early point of control in setting the dynamics of the feedback loop. M6A also regulates circadian regulation of hepatic lipid metabolism. M6A regulates spermatogonial differentiation and meiosis and is essential for male fertility and spermatogenesis. Also required for oogenesis. Involved in the response to DNA damage: in response to ultraviolet irradiation, METTL3 rapidly catalyzes the formation of m6A on poly(A) transcripts at DNA damage sites, leading to the recruitment of POLK to DNA damage sites. M6A is also required for T-cell homeostasis and differentiation: m6A methylation of transcripts of SOCS family members (SOCS1, SOCS3 and CISH) in naive T-cells promotes mRNA destabilization and degradation, promoting T-cell differentiation. Inhibits the type I interferon response by mediating m6A methylation of IFNB. M6A also regulates cortical neurogenesis: m6A methylation of transcripts related to transcription factors, neural stem cells, the cell cycle and neuronal differentiation during brain development promotes their destabilization and decay, promoting differentiation of radial glial cells. M6A also takes place in other RNA molecules, such as primary miRNA (pri-miRNAs). Mediates m6A methylation of Xist RNA, thereby participating in random X inactivation: m6A methylation of Xist leads to target YTHDC1 reader on Xist and promote transcription repression activity of Xist. METTL3 mediates methylation of pri-miRNAs, marking them for recognition and processing by DGCR8. Acts as a positive regulator of mRNA translation independently of the methyltransferase activity: promotes translation by interacting with the translation initiation machinery in the cytoplasm. The protein is N(6)-adenosine-methyltransferase catalytic subunit METTL3 of Mus musculus (Mouse).